The primary structure comprises 271 residues: Norsolorinic acid ketoreductase (271 aa).

The segment at 1-22 is disordered; that stretch reads MNGSLSQHDQERLSTPYRDGPP. NADP(+)-binding residues include I36, N112, Y185, K189, V216, and T218. Residue Y185 is the Proton donor of the active site. K189 serves as the catalytic Lowers pKa of active site Tyr.

Belongs to the short-chain dehydrogenases/reductases (SDR) family.

The protein resides in the cytoplasm. It is found in the cytosol. The protein localises to the vacuole. The catalysed reaction is (1'S)-averantin + NADP(+) = norsolorinic acid + NADPH + H(+). It functions in the pathway mycotoxin biosynthesis; aflatoxin biosynthesis. Norsolorinic acid ketoreductase; part of the gene cluster that mediates the biosynthesis of aflatoxins, a group of polyketide-derived furanocoumarins, and part of the most toxic and carcinogenic compounds among the known mycotoxins. The four major aflatoxins produced by A.parasiticus are aflatoxin B1 (AFB1), aflatoxin B2 (AFB2), aflatoxin G1 (AFG1) and aflatoxin G2 (AFG2). Within the aflatoxin pathway, the norsolorinic acid ketoreductase aflD performs the second step by catalyzing the dehydration of norsolorinic acid (NOR) to form (1'S)-averantin (AVN). The biosynthesis of aflatoxins begins with the norsolorinic acid synthase aflC that combines a hexanoyl starter unit produced by the fatty acid synthase aflA/aflB and 7 malonyl-CoA extender units to synthesize the precursor NOR. The second step is the conversion of NOR to averantin and requires the norsolorinic acid ketoreductase aflD, which catalyzes the dehydration of norsolorinic acid to form (1'S)-averantin. The norsolorinic acid reductases aflE and aflF may also play a role in the conversion of NOR to AVN. The cytochrome P450 monooxygenase aflG then catalyzes the hydroxylation of AVN to 5'hydroxyaverantin (HAVN). The next step is performed by the 5'-hydroxyaverantin dehydrogenase aflH that transforms HAVN to 5'-oxoaverantin (OAVN) which is further converted to averufin (AVF) by aflK that plays a dual role in the pathway, as a 5'-oxoaverantin cyclase that mediates conversion of 5'-oxoaverantin, as well as a versicolorin B synthase in a later step in the pathway. The averufin oxidase aflI catalyzes the conversion of AVF to versiconal hemiacetal acetate (VHA). VHA is then the substrate for the versiconal hemiacetal acetate esterase aflJ to yield versiconal (VAL). Versicolorin B synthase aflK then converts VAL to versicolorin B (VERB) by closing the bisfuran ring of aflatoxin which is required for DNA-binding, thus giving to aflatoxin its activity as a mutagen. Then, the activity of the versicolorin B desaturase aflL leads to versicolorin A (VERA). A branch point starts from VERB since it can also be converted to dihydrodemethylsterigmatocystin (DMDHST), probably also by aflL, VERA being a precursor for aflatoxins B1 and G1, and DMDHST for aflatoxins B2 and G2. Next, the versicolorin reductase aflM and the cytochrome P450 monooxygenase aflN are involved in conversion of VERA to demethylsterigmatocystin (DMST). AflX and aflY seem also involved in this step, through probable aflX-mediated epoxide ring-opening step following versicolorin A oxidation and aflY-mediated Baeyer-Villiger oxidation required for the formation of the xanthone ring. The methyltransferase aflO then leads to the modification of DMST to sterigmatocystin (ST), and of DMDHST to dihydrosterigmatocystin (DHST). Both ST and DHST are then substrates of the O-methyltransferase aflP to yield O-methylsterigmatocystin (OMST) and dihydro-O-methylsterigmatocystin (DHOMST), respectively. Finally OMST is converted to aflatoxins B1 and G1, and DHOMST to aflatoxins B2 and G2, via the action of several enzymes including O-methylsterigmatocystin oxidoreductase aflQ, the cytochrome P450 monooxygenase aflU, but also the NADH-dependent flavin oxidoreductase nadA which is specifically required for the synthesis of AFG1. The sequence is that of Norsolorinic acid ketoreductase from Aspergillus parasiticus (strain ATCC 56775 / NRRL 5862 / SRRC 143 / SU-1).